Here is a 484-residue protein sequence, read N- to C-terminus: Sodium-dependent glucose transporter 1 (484 aa).

Phosphoserine is present on Ser6. The next 12 membrane-spanning stretches (helical) occupy residues 40 to 60 (WFTT…AAVL), 80 to 100 (EIFV…GVLF), 106 to 126 (FLLL…TPFC), 135 to 155 (MMSI…VLIL), 168 to 188 (ALHF…KLAW), 227 to 247 (LLWA…FLFA), 274 to 294 (ALLC…VTYG), 317 to 337 (SIFW…ATLL), 340 to 360 (GTMM…LVLF), 366 to 386 (CLWI…PSGI), 401 to 421 (AFIL…SGIL), and 428 to 448 (LPVI…LFPV).

The protein belongs to the major facilitator superfamily. In terms of tissue distribution, expressed in brain, liver, lung, and kidney. In kidney expressed in cortex and inner medulla, in ascending thin limbs (ATLs) and lower descending thin limbs (DTLs). Primarily expressed in the proximal tubules of the kidney.

The protein localises to the apical cell membrane. In terms of biological role, may function as a sodium-dependent glucose transporter. Potential channels for urea in the inner medulla of kidney. In Rattus norvegicus (Rat), this protein is Sodium-dependent glucose transporter 1.